Here is an 87-residue protein sequence, read N- to C-terminus: Small ribosomal subunit protein uS17 (87 aa).

It belongs to the universal ribosomal protein uS17 family. In terms of assembly, part of the 30S ribosomal subunit.

In terms of biological role, one of the primary rRNA binding proteins, it binds specifically to the 5'-end of 16S ribosomal RNA. The protein is Small ribosomal subunit protein uS17 of Macrococcus caseolyticus (strain JCSC5402) (Macrococcoides caseolyticum).